Reading from the N-terminus, the 331-residue chain is Flotillin-like protein FloA (331 aa).

A run of 2 helical transmembrane segments spans residues 6–26 (LMILAIVAVAIIVLAVFFTFV) and 28–48 (VMLWISALAAGVKISIFTLVG). A required for correct localization region spans residues 236–331 (QTDQAEADKN…KDPSDEDRKS (96 aa)). Short sequence motifs (EA repeat) lie at residues 240–242 (AEA), 251–253 (AEE), 278–282 (EAEAE), and 288–290 (AEA). A disordered region spans residues 312–331 (EMRDSFGKLTKDPSDEDRKS).

It belongs to the flotillin-like FloA family. In terms of assembly, homooligomerizes. Interacts with FloT. Interacts with FtsH midcell. Interacts with PhoR, colocalizes with PhoR in FloA-only membrane rafts.

The protein resides in the cell membrane. It is found in the membrane raft. In terms of biological role, found in functional membrane microdomains (FMM) that may be equivalent to eukaryotic membrane rafts. FMMs are highly dynamic and increase in number as cells age. FloA and FloT function is partially redundant; double deletions have marked synthetic phenotypes. Flotillins are thought to be important factors in membrane fluidity, especially during periods of rapid growth in rich media. Whether specific proteins are associated with FMMs is controversial; in one study FloT rafts have been shown to include proteins involved in adaptation to stationary phase, while FloA-FloT rafts include proteins involved in differentiation including sporulation, biofilm formation and DNA uptake competence. Another (more finely resolved) study only showed association of NfeD2 with FloT rafts of all the proteins examined. Involved in spatial organization of membranes, perhaps recruiting proteins to specific membrane regions. Simultaneous overexpression of both FloA and FloT leads to defects in cell division and differentiation, in part caused by stabilization of FtsH and its subsequent increased ability to degrade proteins. Cells make more biofilm, are about half as long, have less EzrA and more frequent Z-rings. The protein is Flotillin-like protein FloA of Bacillus subtilis (strain 168).